We begin with the raw amino-acid sequence, 418 residues long: Methylmalonic aciduria type A protein, mitochondrial (418 aa).

Residues 1 to 65 (MPMLLPHPHQ…LLSDGLKRKL (65 aa)) constitute a mitochondrion transit peptide. GTP is bound by residues 150–158 (GPPGAGKST), D292, and 328–330 (SAR).

The protein belongs to the SIMIBI class G3E GTPase family. ArgK/MeaB subfamily. In terms of assembly, homodimer. Interacts with MMUT (the apoenzyme form); the interaction is GTP dependent. As to expression, widely expressed. Highest expression is observed in liver and skeletal muscle.

It is found in the mitochondrion. The protein localises to the cytoplasm. It catalyses the reaction GTP + H2O = GDP + phosphate + H(+). With respect to regulation, GTPase activity is stimulated by MMUT. In terms of biological role, GTPase, binds and hydrolyzes GTP. Involved in intracellular vitamin B12 metabolism, mediates the transport of cobalamin (Cbl) into mitochondria for the final steps of adenosylcobalamin (AdoCbl) synthesis. Functions as a G-protein chaperone that assists AdoCbl cofactor delivery from MMAB to the methylmalonyl-CoA mutase (MMUT). Plays a dual role as both a protectase and a reactivase for MMUT. Protects MMUT from progressive inactivation by oxidation by decreasing the rate of the formation of the oxidized inactive cofactor hydroxocobalamin (OH2Cbl). Additionally acts a reactivase by promoting the replacement of OH2Cbl by the active cofactor AdoCbl, restoring the activity of MMUT in the presence and hydrolysis of GTP. This Homo sapiens (Human) protein is Methylmalonic aciduria type A protein, mitochondrial.